The chain runs to 188 residues: Elongation factor P (188 aa).

Belongs to the elongation factor P family.

It is found in the cytoplasm. The protein operates within protein biosynthesis; polypeptide chain elongation. In terms of biological role, involved in peptide bond synthesis. Stimulates efficient translation and peptide-bond synthesis on native or reconstituted 70S ribosomes in vitro. Probably functions indirectly by altering the affinity of the ribosome for aminoacyl-tRNA, thus increasing their reactivity as acceptors for peptidyl transferase. The polypeptide is Elongation factor P (Phocaeicola vulgatus (strain ATCC 8482 / DSM 1447 / JCM 5826 / CCUG 4940 / NBRC 14291 / NCTC 11154) (Bacteroides vulgatus)).